Consider the following 176-residue polypeptide: MFLIITRDTMFFTAMKNILSKGNVVHIQNEEEIDVMLHQNAFVIIDTLMNNVFHSNFLTQIERLKPVHVIIFSPFNIKRCLGKVPVTFVPRTITIIDFVALINGSYCSVPEAAVSLSRKQHQVLSCIANQMTTEDILEKLKISLKTFYCHKHNIMMILNLKRINELVRHQHIDYLV.

One can recognise an HTH luxR-type domain in the interval 109-174; sequence VPEAAVSLSR…ELVRHQHIDY (66 aa). Residues 133–152 constitute a DNA-binding region (H-T-H motif); it reads TEDILEKLKISLKTFYCHKH.

In terms of biological role, may act as a transcriptional regulator of dctA. The polypeptide is HTH-type transcriptional regulator DctR (dctR) (Escherichia coli (strain K12)).